The chain runs to 186 residues: Large ribosomal subunit protein uL5 (186 aa).

The protein belongs to the universal ribosomal protein uL5 family. In terms of assembly, part of the 50S ribosomal subunit; part of the 5S rRNA/L5/L18/L25 subcomplex. Contacts the 5S rRNA and the P site tRNA. Forms a bridge to the 30S subunit in the 70S ribosome.

Its function is as follows. This is one of the proteins that bind and probably mediate the attachment of the 5S RNA into the large ribosomal subunit, where it forms part of the central protuberance. In the 70S ribosome it contacts protein S13 of the 30S subunit (bridge B1b), connecting the 2 subunits; this bridge is implicated in subunit movement. Contacts the P site tRNA; the 5S rRNA and some of its associated proteins might help stabilize positioning of ribosome-bound tRNAs. This chain is Large ribosomal subunit protein uL5, found in Cereibacter sphaeroides (strain ATCC 17029 / ATH 2.4.9) (Rhodobacter sphaeroides).